The chain runs to 408 residues: RUN domain-containing protein 3B (408 aa).

The interval 1–25 is disordered; it reads MASRSLGGLSGSRGGGGGGGGKKSL. Residues 8-22 show a composition bias toward gly residues; the sequence is GLSGSRGGGGGGGGK. Position 13 is an omega-N-methylarginine (R13). An RUN domain is found at 58–190; it reads DDSSPEFNNF…IDFSFCLKGE (133 aa). The tract at residues 213 to 238 is disordered; that stretch reads DSISSDEEELRTFGSSDSESSTPENV. Phosphoserine occurs at positions 216 and 217. Residues 225–236 show a composition bias toward polar residues; sequence FGSSDSESSTPE. The stretch at 301-326 forms a coiled coil; the sequence is AHKLEKEQLEYIIVELQDQLKSYQSL. Residues 337-359 form a disordered region; the sequence is QASLDPSHSQEGDGKQDSLNFIG.

Belongs to the RUNDC3 family. Interacts with RAP2A.

The sequence is that of RUN domain-containing protein 3B (Rundc3b) from Mus musculus (Mouse).